The following is a 238-amino-acid chain: Keratin-associated protein 5-3 (238 aa).

11 tandem repeats follow at residues 35–38, 41–44, 47–50, 91–94, 150–153, 160–163, 170–173, 189–192, 199–202, 218–221, and 228–231. An 11 X 4 AA repeats of C-C-X-P region spans residues 35 to 231; sequence CCVPVCCCKP…CSSQSSCCVP (197 aa).

This sequence belongs to the KRTAP type 5 family. Interacts with hair keratins. Restricted to hair root, not detected in any other tissues.

In the hair cortex, hair keratin intermediate filaments are embedded in an interfilamentous matrix, consisting of hair keratin-associated protein (KRTAP), which are essential for the formation of a rigid and resistant hair shaft through their extensive disulfide bond cross-linking with abundant cysteine residues of hair keratins. The matrix proteins include the high-sulfur and high-glycine-tyrosine keratins. This Homo sapiens (Human) protein is Keratin-associated protein 5-3 (KRTAP5-3).